The chain runs to 116 residues: Large ribosomal subunit protein bL17 (116 aa).

This sequence belongs to the bacterial ribosomal protein bL17 family. Part of the 50S ribosomal subunit. Contacts protein L32.

In Deinococcus geothermalis (strain DSM 11300 / CIP 105573 / AG-3a), this protein is Large ribosomal subunit protein bL17.